We begin with the raw amino-acid sequence, 367 residues long: 2-oxoisovalerate dehydrogenase subunit alpha (367 aa).

Substrate is bound by residues phenylalanine 66, tyrosine 95, 128-131 (MPEH), and serine 144. Residue 94–96 (YYR) coordinates thiamine diphosphate. Thiamine diphosphate is bound by residues 144–146 (SPI), 174–180 (GDGATSE), 204–208 (NFYAI), and histidine 273. Positions 175, 204, and 206 each coordinate Mg(2+).

Belongs to the BCKDHA family. Heterotetramer of two alpha and two beta chains. Directly associated with ODBB in the E1 complex. Thiamine diphosphate is required as a cofactor.

The catalysed reaction is N(6)-[(R)-lipoyl]-L-lysyl-[protein] + 3-methyl-2-oxobutanoate + H(+) = N(6)-[(R)-S(8)-2-methylpropanoyldihydrolipoyl]-L-lysyl-[protein] + CO2. In terms of biological role, the branched-chain alpha-keto dehydrogenase complex catalyzes the overall conversion of alpha-keto acids to acyl-CoA and CO(2). It contains multiple copies of three enzymatic components: branched-chain alpha-keto acid decarboxylase (E1), lipoamide acyltransferase (E2) and lipoamide dehydrogenase (E3). The sequence is that of 2-oxoisovalerate dehydrogenase subunit alpha from Thermus thermophilus (strain ATCC BAA-163 / DSM 7039 / HB27).